The sequence spans 423 residues: Ferrochelatase, mitochondrial (423 aa).

Residues 1–54 constitute a mitochondrion transit peptide; sequence MRSLGANMAAALRAAGVLLRDPLVSSSWRVYQPWRWKSVAAAAAATTETAQHAQ. An N6-acetyllysine modification is found at lysine 57. Residues arginine 115, tyrosine 123, and serine 130 each contribute to the protoporphyrin IX site. Position 138 is an N6-succinyllysine (lysine 138). Cysteine 196 contributes to the [2Fe-2S] cluster binding site. Residues histidine 230 and aspartate 383 contribute to the active site. [2Fe-2S] cluster contacts are provided by cysteine 403, cysteine 406, and cysteine 411. Lysine 415 bears the N6-acetyllysine; alternate mark. The residue at position 415 (lysine 415) is an N6-succinyllysine; alternate.

It belongs to the ferrochelatase family. Homodimer. Homotetramer. Interaction with PGRMC1; the interaction results in decreased FECH activity. Interacts with ABCB10 and SLC25A37; this interaction forms an oligomeric complex. Forms a complex with ABCB7 and ABCB10, where a dimeric FECH bridges ABCB7 and ABCB10 homodimers; this complex may be required for cellular iron homeostasis, mitochondrial function and heme biosynthesis. Interacts with ABCB7 and ABCB10. [2Fe-2S] cluster serves as cofactor.

Its subcellular location is the mitochondrion inner membrane. It catalyses the reaction heme b + 2 H(+) = protoporphyrin IX + Fe(2+). Its pathway is porphyrin-containing compound metabolism; protoheme biosynthesis; protoheme from protoporphyrin-IX: step 1/1. Functionally, catalyzes the ferrous insertion into protoporphyrin IX and participates in the terminal step in the heme biosynthetic pathway. The polypeptide is Ferrochelatase, mitochondrial (Pan troglodytes (Chimpanzee)).